Reading from the N-terminus, the 96-residue chain is Ferredoxin-1 (96 aa).

One can recognise a 2Fe-2S ferredoxin-type domain in the interval 1-95; sequence MKVIINGKEF…DCDEIVIESE (95 aa). Positions 34, 39, 42, and 78 each coordinate [2Fe-2S] cluster. Cysteines 52 and 87 form a disulfide.

The protein belongs to the 2Fe2S plant-type ferredoxin family. The cofactor is [2Fe-2S] cluster.

Functionally, ferredoxins are iron-sulfur proteins that transfer electrons in a wide variety of metabolic reactions. The protein is Ferredoxin-1 (fdx1) of Aquifex aeolicus (strain VF5).